The sequence spans 232 residues: Phosphoribosylformylglycinamidine synthase subunit PurQ (232 aa).

The region spanning 3 to 232 (FAVIVFPGSN…SLVASALAVV (230 aa)) is the Glutamine amidotransferase type-1 domain. Cysteine 86 serves as the catalytic Nucleophile. Catalysis depends on residues histidine 203 and glutamate 205.

Part of the FGAM synthase complex composed of 1 PurL, 1 PurQ and 2 PurS subunits.

It localises to the cytoplasm. The enzyme catalyses N(2)-formyl-N(1)-(5-phospho-beta-D-ribosyl)glycinamide + L-glutamine + ATP + H2O = 2-formamido-N(1)-(5-O-phospho-beta-D-ribosyl)acetamidine + L-glutamate + ADP + phosphate + H(+). The catalysed reaction is L-glutamine + H2O = L-glutamate + NH4(+). Its pathway is purine metabolism; IMP biosynthesis via de novo pathway; 5-amino-1-(5-phospho-D-ribosyl)imidazole from N(2)-formyl-N(1)-(5-phospho-D-ribosyl)glycinamide: step 1/2. In terms of biological role, part of the phosphoribosylformylglycinamidine synthase complex involved in the purines biosynthetic pathway. Catalyzes the ATP-dependent conversion of formylglycinamide ribonucleotide (FGAR) and glutamine to yield formylglycinamidine ribonucleotide (FGAM) and glutamate. The FGAM synthase complex is composed of three subunits. PurQ produces an ammonia molecule by converting glutamine to glutamate. PurL transfers the ammonia molecule to FGAR to form FGAM in an ATP-dependent manner. PurS interacts with PurQ and PurL and is thought to assist in the transfer of the ammonia molecule from PurQ to PurL. This is Phosphoribosylformylglycinamidine synthase subunit PurQ from Gloeobacter violaceus (strain ATCC 29082 / PCC 7421).